The chain runs to 608 residues: Actin-related protein 8 (608 aa).

Residues 1-20 (MQRSRASSTSSGRLQASQQV) are disordered. 272–275 (DIGA) is an ATP binding site.

It belongs to the actin family. ARP8 subfamily. As to quaternary structure, component of the chromatin remodeling Ino80 complex. Exists as monomers and dimers, but the dimer is most probably the biologically relevant form required for stable interactions with histones that exploits the twofold symmetry of the nucleosome core.

The protein localises to the nucleus. Its function is as follows. Plays an important role in the functional organization of mitotic chromosomes. Exhibits low basal ATPase activity, and unable to polymerize. Proposed core component of the chromatin remodeling INO80 complex which is involved in transcriptional regulation, DNA replication and probably DNA repair. Strongly prefer nucleosomes and H3-H4 tetramers over H2A-H2B dimers, suggesting it may act as a nucleosome recognition module within the complex. The chain is Actin-related protein 8 from Drosophila pseudoobscura pseudoobscura (Fruit fly).